The sequence spans 390 residues: uncharacterized protein (390 aa).

The next 2 membrane-spanning stretches (helical) occupy residues 27 to 47 and 356 to 376; these read GGLI…MEWI and FGGF…LASF.

The protein belongs to the ERGIC family.

Its subcellular location is the membrane. This is an uncharacterized protein from Schizosaccharomyces pombe (strain 972 / ATCC 24843) (Fission yeast).